The following is a 583-amino-acid chain: Protein FMP25, mitochondrial (583 aa).

Residues 1 to 25 (MSFRLFTRTSQRLPRLNWVSPIRRY) constitute a mitochondrion transit peptide. Residues 83–105 (AVGQGILILVVVGGLGTAYLRWP) traverse the membrane as a helical segment. RCC1 repeat units follow at residues 332–389 (KGQF…AIDK), 390–452 (TGEI…VTIR), 459–510 (DHHY…TETE), and 512–569 (ENEV…KEQR).

The protein resides in the mitochondrion membrane. In Saccharomyces cerevisiae (strain ATCC 204508 / S288c) (Baker's yeast), this protein is Protein FMP25, mitochondrial (FMP25).